A 263-amino-acid chain; its full sequence is Small ribosomal subunit protein uS2 (263 aa).

The protein belongs to the universal ribosomal protein uS2 family. As to quaternary structure, component of the small ribosomal subunit. Mature ribosomes consist of a small (40S) and a large (60S) subunit. The 40S subunit contains about 33 different proteins and 1 molecule of RNA (18S). The 60S subunit contains about 49 different proteins and 3 molecules of RNA (25S, 5.8S and 5S). Interacts with RPS21.

Its subcellular location is the cytoplasm. In terms of biological role, required for the assembly and/or stability of the 40S ribosomal subunit. Required for the processing of the 20S rRNA-precursor to mature 18S rRNA in a late step of the maturation of 40S ribosomal subunits. The protein is Small ribosomal subunit protein uS2 of Vairimorpha ceranae (strain BRL01) (Microsporidian parasite).